The following is a 584-amino-acid chain: Probable terpene synthase 9 (584 aa).

Residues aspartate 339, aspartate 343, and glutamate 491 each contribute to the Mg(2+) site. A DDXXD motif motif is present at residues 339–343; the sequence is DDMYD.

This sequence belongs to the terpene synthase family. Requires Mg(2+) as cofactor.

Its function is as follows. Probable sesquiterpene synthase. This Ricinus communis (Castor bean) protein is Probable terpene synthase 9 (TPS9).